The following is a 456-amino-acid chain: MTVTVRFAPSPTGQIHIGNARTALFNWLFARRAGGSFVLRFDDTDVERSRREYADQIEIDLAWLGIKPDLTVRQSERFGLYNQAVEKLKEAGRLYPCYETAEELELRRKIRLSRRLPPIYGREALKLTEEQKAAYEAEGRKPHWRFLLPNFDSDPFSTGRTEIHWDDVIRGPQTVDLASMSDPVLVREDGTFLYTLPSVVDDIDLGITHVIRGDDHVTNTGAQIALFEALGAKAPCFGHHNLLTTVTGEGLSKRTGALSIASLRKAGIEPMAVASLAVLIGTSEAVTAYRDMEELAAHFEPASSSKSSAKFDPAELEALSRSLIQAMPFEAAAPRLAAMGVEGSIAEPFWNAVRGNIDKLSEAAEWWHIVMKGPEPTEFTEDDRNFVNEAFDLLPPEPWDRETWRSWTEKVKEKTGRKGKALFRPLRLALTGRESGPELADLLPLLGRERTLARQP.

The 'HIGH' region motif lies at 9–19; it reads PSPTGQIHIGN. The 'KMSKS' region signature appears at 250–254; that stretch reads GLSKR. Lysine 253 contacts ATP.

It belongs to the class-I aminoacyl-tRNA synthetase family. Glutamate--tRNA ligase type 1 subfamily. In terms of assembly, monomer.

It localises to the cytoplasm. It carries out the reaction tRNA(Glu) + L-glutamate + ATP = L-glutamyl-tRNA(Glu) + AMP + diphosphate. In terms of biological role, catalyzes the attachment of glutamate to tRNA(Glu) in a two-step reaction: glutamate is first activated by ATP to form Glu-AMP and then transferred to the acceptor end of tRNA(Glu). In Chelativorans sp. (strain BNC1), this protein is Glutamate--tRNA ligase 1.